Reading from the N-terminus, the 239-residue chain is Ribosomal RNA small subunit methyltransferase G (239 aa).

S-adenosyl-L-methionine-binding positions include Gly-78, Phe-83, 129–130, and Arg-148; that span reads AE.

Belongs to the methyltransferase superfamily. RNA methyltransferase RsmG family.

It localises to the cytoplasm. In terms of biological role, specifically methylates the N7 position of a guanine in 16S rRNA. The chain is Ribosomal RNA small subunit methyltransferase G from Alkaliphilus metalliredigens (strain QYMF).